We begin with the raw amino-acid sequence, 436 residues long: Phosphate-repressible acid phosphatase (436 aa).

Positions 1–20 (MKGTAASALLIALSATAAQA) are cleaved as a signal peptide. Residues N227, N283, and N304 are each glycosylated (N-linked (GlcNAc...) asparagine).

As to quaternary structure, monomer.

It catalyses the reaction a phosphate monoester + H2O = an alcohol + phosphate. In Aspergillus niger, this protein is Phosphate-repressible acid phosphatase (pacA).